A 572-amino-acid polypeptide reads, in one-letter code: Proline--tRNA ligase (572 aa).

Belongs to the class-II aminoacyl-tRNA synthetase family. ProS type 1 subfamily. As to quaternary structure, homodimer.

Its subcellular location is the cytoplasm. It carries out the reaction tRNA(Pro) + L-proline + ATP = L-prolyl-tRNA(Pro) + AMP + diphosphate. Functionally, catalyzes the attachment of proline to tRNA(Pro) in a two-step reaction: proline is first activated by ATP to form Pro-AMP and then transferred to the acceptor end of tRNA(Pro). As ProRS can inadvertently accommodate and process non-cognate amino acids such as alanine and cysteine, to avoid such errors it has two additional distinct editing activities against alanine. One activity is designated as 'pretransfer' editing and involves the tRNA(Pro)-independent hydrolysis of activated Ala-AMP. The other activity is designated 'posttransfer' editing and involves deacylation of mischarged Ala-tRNA(Pro). The misacylated Cys-tRNA(Pro) is not edited by ProRS. The protein is Proline--tRNA ligase of Yersinia pseudotuberculosis serotype O:1b (strain IP 31758).